A 142-amino-acid chain; its full sequence is Lysozyme X (142 aa).

Positions 1–19 (MRALLGICVLALVTPAVLG) are cleaved as a signal peptide. One can recognise a C-type lysozyme domain in the interval 20-142 (RTMDRCSLAR…YLPPIDDCFV (123 aa)). Intrachain disulfides connect C25–C140, C46–C130, C81–C97, and C93–C111. Active-site residues include E51 and D69.

It belongs to the glycosyl hydrolase 22 family. In terms of tissue distribution, found in the midgut.

It carries out the reaction Hydrolysis of (1-&gt;4)-beta-linkages between N-acetylmuramic acid and N-acetyl-D-glucosamine residues in a peptidoglycan and between N-acetyl-D-glucosamine residues in chitodextrins.. In terms of biological role, unlikely to play an active role in the humoral immune defense. May have a function in the digestion of bacteria in the food. May be involved in the clearance of bacteria from the larval gut before metamorphosis. The protein is Lysozyme X (LysX) of Drosophila melanogaster (Fruit fly).